The following is a 570-amino-acid chain: Conserved oligomeric Golgi complex subunit 8 (570 aa).

It belongs to the COG8 family. In terms of assembly, component of the conserved oligomeric Golgi complex which is composed of eight different subunits and is required for normal Golgi morphology and localization.

The protein resides in the golgi apparatus membrane. Functionally, required for normal Golgi function. This chain is Conserved oligomeric Golgi complex subunit 8, found in Drosophila melanogaster (Fruit fly).